The primary structure comprises 223 residues: Glutathione S-transferase A1 (223 aa).

An N-acetylmethionine modification is found at methionine 1. N-acetylalanine; in Glutathione S-transferase A1, N-terminally processed is present on alanine 2. Residues 3–83 form the GST N-terminal domain; that stretch reads GKPVLHYFNA…YIATKYDLYG (81 aa). The residue at position 4 (lysine 4) is an N6-succinyllysine. Residues tyrosine 9, lysine 45, 54 to 55, and 67 to 68 each bind glutathione; these read QV and QT. A GST C-terminal domain is found at 85–208; it reads DMKERALIDM…QPGSQRKPPM (124 aa).

Belongs to the GST superfamily. Alpha family. In terms of assembly, homodimer. As to expression, expressed in the liver, skin and kidney.

The catalysed reaction is RX + glutathione = an S-substituted glutathione + a halide anion + H(+). It catalyses the reaction prostaglandin A2 + glutathione = prostaglandin A2-S-(R)-glutathione. It carries out the reaction prostaglandin J2 + glutathione = prostaglandin J2-S-(R)-glutathione. The enzyme catalyses (13S)-hydroperoxy-(9Z,11E)-octadecadienoate + 2 glutathione = (13S)-hydroxy-(9Z,11E)-octadecadienoate + glutathione disulfide + H2O. The catalysed reaction is androst-5-ene-3,17-dione = androst-4-ene-3,17-dione. In terms of biological role, glutathione S-transferase that catalyzes the nucleophilic attack of the sulfur atom of glutathione on the electrophilic groups of a wide range of exogenous and endogenous compounds. Involved in the formation of glutathione conjugates of both prostaglandin A2 (PGA2) and prostaglandin J2 (PGJ2). It also catalyzes the isomerization of D5-androstene-3,17-dione (AD) into D4-androstene-3,17-dione and may therefore play an important role in hormone biosynthesis. Through its glutathione-dependent peroxidase activity toward the fatty acid hydroperoxide (13S)-hydroperoxy-(9Z,11E)-octadecadienoate/13-HPODE it is also involved in the metabolism of oxidized linoleic acid. This is Glutathione S-transferase A1 (Gsta1) from Mus musculus (Mouse).